Here is an 807-residue protein sequence, read N- to C-terminus: Nucleolar complex protein 3 homolog (807 aa).

Disordered regions lie at residues 27–93 (KLKN…DMMD) and 167–191 (EKPV…EVIE). Positions 40–51 (KKYRKEQRKLRQ) are enriched in basic residues. Basic and acidic residues predominate over residues 52–78 (AVKDAVSKKPIPLEDPKSKRPVKRMER). Acidic residues-rich tracts occupy residues 79-93 (EEDE…DMMD) and 174-190 (QQEE…EEVI). K332 is covalently cross-linked (Glycyl lysine isopeptide (Lys-Gly) (interchain with G-Cter in SUMO2)). Residues 449–489 (FKEKRKTLSRMQRKWKKAEEKLERELREAEASESTEKKLKL) are a coiled coil.

This sequence belongs to the CBF/MAK21 family.

It localises to the nucleus. It is found in the nucleolus. Its subcellular location is the nucleus speckle. Functionally, may be required for adipogenesis. This Mus musculus (Mouse) protein is Nucleolar complex protein 3 homolog (Noc3l).